A 266-amino-acid chain; its full sequence is Thymidylate synthase (266 aa).

Arg-24 provides a ligand contact to dUMP. Position 54 (His-54) interacts with (6R)-5,10-methylene-5,6,7,8-tetrahydrofolate. 129-130 (RR) contacts dUMP. Catalysis depends on Cys-149, which acts as the Nucleophile. DUMP-binding positions include 169 to 172 (RSAD), Asn-180, and 210 to 212 (HIY). Asp-172 provides a ligand contact to (6R)-5,10-methylene-5,6,7,8-tetrahydrofolate. Position 265 (Ala-265) interacts with (6R)-5,10-methylene-5,6,7,8-tetrahydrofolate.

This sequence belongs to the thymidylate synthase family. Bacterial-type ThyA subfamily. Homodimer.

The protein resides in the cytoplasm. It catalyses the reaction dUMP + (6R)-5,10-methylene-5,6,7,8-tetrahydrofolate = 7,8-dihydrofolate + dTMP. It participates in pyrimidine metabolism; dTTP biosynthesis. In terms of biological role, catalyzes the reductive methylation of 2'-deoxyuridine-5'-monophosphate (dUMP) to 2'-deoxythymidine-5'-monophosphate (dTMP) while utilizing 5,10-methylenetetrahydrofolate (mTHF) as the methyl donor and reductant in the reaction, yielding dihydrofolate (DHF) as a by-product. This enzymatic reaction provides an intracellular de novo source of dTMP, an essential precursor for DNA biosynthesis. This is Thymidylate synthase from Mycobacterium sp. (strain KMS).